The sequence spans 472 residues: Aspartyl/glutamyl-tRNA(Asn/Gln) amidotransferase subunit B (472 aa).

The protein belongs to the GatB/GatE family. GatB subfamily. As to quaternary structure, heterotrimer of A, B and C subunits.

It carries out the reaction L-glutamyl-tRNA(Gln) + L-glutamine + ATP + H2O = L-glutaminyl-tRNA(Gln) + L-glutamate + ADP + phosphate + H(+). The catalysed reaction is L-aspartyl-tRNA(Asn) + L-glutamine + ATP + H2O = L-asparaginyl-tRNA(Asn) + L-glutamate + ADP + phosphate + 2 H(+). In terms of biological role, allows the formation of correctly charged Asn-tRNA(Asn) or Gln-tRNA(Gln) through the transamidation of misacylated Asp-tRNA(Asn) or Glu-tRNA(Gln) in organisms which lack either or both of asparaginyl-tRNA or glutaminyl-tRNA synthetases. The reaction takes place in the presence of glutamine and ATP through an activated phospho-Asp-tRNA(Asn) or phospho-Glu-tRNA(Gln). In Mycoplasmopsis agalactiae (strain NCTC 10123 / CIP 59.7 / PG2) (Mycoplasma agalactiae), this protein is Aspartyl/glutamyl-tRNA(Asn/Gln) amidotransferase subunit B.